The primary structure comprises 276 residues: Adenylate kinase (276 aa).

Gly-38–Thr-43 lines the ATP pocket. An NMP region spans residues Ser-58–Val-87. Residues Thr-59, Arg-64, Gly-85–Val-87, Gly-113–Arg-116, and Gln-120 each bind AMP. An LID region spans residues Gly-154 to Asp-191. ATP is bound by residues Arg-155 and Ser-164–Tyr-165. Residues Arg-188 and Arg-199 each coordinate AMP. Lys-227 serves as a coordination point for ATP.

It belongs to the adenylate kinase family. AK2 subfamily. In terms of assembly, monomer.

The protein localises to the cytoplasm. It is found in the cytosol. Its subcellular location is the mitochondrion intermembrane space. The enzyme catalyses AMP + ATP = 2 ADP. Its function is as follows. Catalyzes the reversible transfer of the terminal phosphate group between ATP and AMP. Plays an important role in cellular energy homeostasis and in adenine nucleotide metabolism. Adenylate kinase activity is critical for regulation of the phosphate utilization and the AMP de novo biosynthesis pathways. This Dictyostelium discoideum (Social amoeba) protein is Adenylate kinase (adkA).